A 216-amino-acid chain; its full sequence is U1 small nuclear ribonucleoprotein A (216 aa).

2 RRM domains span residues 7 to 86 (QTIY…YSKS) and 142 to 216 (QILF…FAKK). The disordered stretch occupies residues 97–142 (TFKERPKKVKPPKPAPGTDEKKDKKKKPSSAENSNPNAQTEQPPNQ). Over residues 126 to 142 (SAENSNPNAQTEQPPNQ) the composition is skewed to polar residues.

This sequence belongs to the RRM U1 A/B'' family. As to quaternary structure, belongs to the spliceosome where it is associated with snRNP U1. Interacts with the SMN complex.

It is found in the nucleus. Its function is as follows. Binds stem loop II of U1 snRNA. It is the first snRNP to interact with pre-mRNA. This interaction is required for the subsequent binding of U2 snRNP and the U4/U6/U5 tri-snRNP. Plays a role in regulating sex-lethal splicing. The polypeptide is U1 small nuclear ribonucleoprotein A (snf) (Drosophila melanogaster (Fruit fly)).